The following is a 332-amino-acid chain: mRNA-decapping enzyme 1 (332 aa).

Positions 141 to 173 (ARAAKAASEAPQASVPAPTQAPAAPAQAPQMAP) are enriched in low complexity. The tract at residues 141-175 (ARAAKAASEAPQASVPAPTQAPAAPAQAPQMAPQA) is disordered.

Belongs to the DCP1 family. In terms of assembly, may be a component of the decapping complex composed of dcap-1 and dcap-2. In terms of tissue distribution, expressed in neurons including touch receptor neurons and motor neurons.

The protein resides in the cytoplasm. Its subcellular location is the cytoplasmic granule. Its function is as follows. Component of the decapping complex necessary for the degradation of mRNAs, both in normal mRNA turnover and in nonsense-mediated mRNA decay. In contrast to orthologs, does not possess decapping activity and does not remove the 7-methyl guanine cap structure from mRNA molecules. In the nervous system, negatively regulates the expression of insulin-like peptide ins-7, which in turn promotes longevity. This may in part be through promoting the activity of daf-16 in distal tissues. Required for the developmental axon guidance and regrowth of PLM touch receptor neurons. In ADL sensory neurons, plays a role in ciliary shape formation. Acts in neurons to promote larval survival at high temperatures by negatively regulating lin-14 expression. The chain is mRNA-decapping enzyme 1 from Caenorhabditis elegans.